Reading from the N-terminus, the 417-residue chain is Sulfite reductase, dissimilatory-type subunit alpha (417 aa).

[4Fe-4S] cluster contacts are provided by C170, C176, C214, C218, C264, C284, C287, and C290. C218 is a siroheme binding site.

[4Fe-4S] cluster serves as cofactor. It depends on siroheme as a cofactor.

The catalysed reaction is [DsrC protein]-trisulfide + NAD(+) + 3 H2O = [DsrC protein]-dithiol + sulfite + NADH + 3 H(+). Functionally, catalyzes the reduction of sulfite to sulfide. This is the terminal oxidation reaction in sulfate respiration. The chain is Sulfite reductase, dissimilatory-type subunit alpha (dsrA) from Allochromatium vinosum (strain ATCC 17899 / DSM 180 / NBRC 103801 / NCIMB 10441 / D) (Chromatium vinosum).